The primary structure comprises 287 residues: MKRIFLLIATNMAILLVASIVMSILGVNTSTMGGLLVFAAIFGFGGAFISLAISKWMAKKTMGCEVITTPRDNTERWLVETVARQAEQAGIKMPEVAIYQSPELNAFATGPSKDNSLVAVSSGLLYGMNQDEIEAVLAHEVSHVANGDMVTLTLIQGVVNTFVIFAARVVAGIIDNFVSSNDEEGEGLGMFAYMAVVFVLDMLFGILASMIVAYFSRIREYRADEGAAKLAGKEKMIAALDRLRQGPETGAMPASMSALGINGKKSMAELMMSHPPLEKRIEALRAH.

A run of 2 helical transmembrane segments spans residues 4–24 (IFLL…VMSI) and 33–53 (GGLL…SLAI). Histidine 139 contributes to the Zn(2+) binding site. Residue glutamate 140 is part of the active site. Histidine 143 is a Zn(2+) binding site. A run of 2 helical transmembrane segments spans residues 154 to 174 (LIQG…AGII) and 195 to 215 (AVVF…VAYF). A Zn(2+)-binding site is contributed by glutamate 220.

It belongs to the peptidase M48B family. Zn(2+) serves as cofactor.

Its subcellular location is the cell inner membrane. The sequence is that of Protease HtpX from Shewanella pealeana (strain ATCC 700345 / ANG-SQ1).